The chain runs to 92 residues: Co-chaperonin GroES (92 aa).

This sequence belongs to the GroES chaperonin family. Heptamer of 7 subunits arranged in a ring. Interacts with the chaperonin GroEL.

The protein localises to the cytoplasm. Together with the chaperonin GroEL, plays an essential role in assisting protein folding. The GroEL-GroES system forms a nano-cage that allows encapsulation of the non-native substrate proteins and provides a physical environment optimized to promote and accelerate protein folding. GroES binds to the apical surface of the GroEL ring, thereby capping the opening of the GroEL channel. This chain is Co-chaperonin GroES, found in Thermotoga maritima (strain ATCC 43589 / DSM 3109 / JCM 10099 / NBRC 100826 / MSB8).